Here is a 377-residue protein sequence, read N- to C-terminus: Ferric enterobactin transport protein FepE (377 aa).

Over 1 to 41 (MSSLNIKQGSDAHFPDYPLASPSNNEIDLLNLISVLWRAKK) the chain is Cytoplasmic. Residues 42–62 (TVMAVVFAFACAGLLISFILP) form a helical membrane-spanning segment. Residues 63–338 (QKWTSAAVVT…LPVKKDGPGK (276 aa)) are Periplasmic-facing. Residues 339–359 (AIIVILSALIGGMVACGGVLL) traverse the membrane as a helical segment. At 360–377 (RYAMASRKQDAMMADHLV) the chain is on the cytoplasmic side.

It belongs to the WzzB/Cld/Rol family.

It is found in the cell inner membrane. Its function is as follows. Part of the ferric enterobactin transport system. This is Ferric enterobactin transport protein FepE (fepE) from Escherichia coli (strain K12).